The chain runs to 155 residues: Ribonuclease H (155 aa).

The RNase H type-1 domain occupies 1 to 142; sequence MLKQVEIFTD…CDELARAAAM (142 aa). Mg(2+) contacts are provided by D10, E48, D70, and D134.

It belongs to the RNase H family. In terms of assembly, monomer. Mg(2+) serves as cofactor.

The protein resides in the cytoplasm. The catalysed reaction is Endonucleolytic cleavage to 5'-phosphomonoester.. In terms of biological role, endonuclease that specifically degrades the RNA of RNA-DNA hybrids. This is Ribonuclease H from Salmonella paratyphi A (strain AKU_12601).